The primary structure comprises 85 residues: U4-theraphotoxin-Hhn1t (85 aa).

An N-terminal signal peptide occupies residues 1–22; that stretch reads MKVTLIAILTCAAVLVLHTTAA. The propeptide occupies 23 to 48; it reads EELEAESQLMEVGMPDTELAAVDEER. 3 cysteine pairs are disulfide-bonded: C52/C66, C56/C77, and C71/C82.

Belongs to the neurotoxin 12 (Hwtx-2) family. 02 (Hwtx-2) subfamily. Expressed by the venom gland.

The protein resides in the secreted. Postsynaptic neurotoxin. The sequence is that of U4-theraphotoxin-Hhn1t from Cyriopagopus hainanus (Chinese bird spider).